A 356-amino-acid chain; its full sequence is D-alanine--D-alanine ligase (356 aa).

The region spanning Lys146–Gln350 is the ATP-grasp domain. Lys173 to Glu228 lines the ATP pocket. Residues Asp305, Glu317, and Asn319 each coordinate Mg(2+).

The protein belongs to the D-alanine--D-alanine ligase family. The cofactor is Mg(2+). Requires Mn(2+) as cofactor.

Its subcellular location is the cytoplasm. It catalyses the reaction 2 D-alanine + ATP = D-alanyl-D-alanine + ADP + phosphate + H(+). The protein operates within cell wall biogenesis; peptidoglycan biosynthesis. In terms of biological role, cell wall formation. The protein is D-alanine--D-alanine ligase of Corynebacterium aurimucosum (strain ATCC 700975 / DSM 44827 / CIP 107346 / CN-1) (Corynebacterium nigricans).